Reading from the N-terminus, the 382-residue chain is Na(+)/H(+) antiporter NhaA (382 aa).

11 consecutive transmembrane segments (helical) span residues 14–34 (AGGI…NSAM), 47–67 (FGMS…FLLI), 87–107 (IFPA…YVAF), 117–137 (GWAI…ALLG), 146–166 (VFLL…IALF), 171–191 (LSTI…MLNA), 205–225 (LILW…GVVI), 247–267 (ALHP…NAGI), 271–291 (GVSL…GLFL), 321–341 (IFAV…ISSL), and 353–373 (YARL…YSLL).

It belongs to the NhaA Na(+)/H(+) (TC 2.A.33) antiporter family.

It is found in the cell inner membrane. The enzyme catalyses Na(+)(in) + 2 H(+)(out) = Na(+)(out) + 2 H(+)(in). In terms of biological role, na(+)/H(+) antiporter that extrudes sodium in exchange for external protons. The chain is Na(+)/H(+) antiporter NhaA from Vibrio cholerae serotype O1 (strain ATCC 39541 / Classical Ogawa 395 / O395).